The primary structure comprises 171 residues: S-ribosylhomocysteine lyase (171 aa).

Histidine 54, histidine 58, and cysteine 128 together coordinate Fe cation.

The protein belongs to the LuxS family. Homodimer. Fe cation is required as a cofactor.

The enzyme catalyses S-(5-deoxy-D-ribos-5-yl)-L-homocysteine = (S)-4,5-dihydroxypentane-2,3-dione + L-homocysteine. Its function is as follows. Involved in the synthesis of autoinducer 2 (AI-2) which is secreted by bacteria and is used to communicate both the cell density and the metabolic potential of the environment. The regulation of gene expression in response to changes in cell density is called quorum sensing. Catalyzes the transformation of S-ribosylhomocysteine (RHC) to homocysteine (HC) and 4,5-dihydroxy-2,3-pentadione (DPD). This chain is S-ribosylhomocysteine lyase, found in Serratia proteamaculans (strain 568).